The chain runs to 557 residues: MTKYVFVTGGVVSSLGKGIAAASLAAILESRGLKVTLLKLDPYINVDPGTMSPFQHGEVFVTEDGAETDLDLGHYERFISTKMRKANNFTTGQIYESVIRKERRGDYLGKTVQVIPHITNEIQAFIERGAASATCGEPDVAIVEVGGTVGDIESLPFLEAARQMSLRMGRNSACFVHLTLVPWVATAGELKTKPTQHSVQKLREIGISPHVLLCRADRRIPDDERAKISMFSNVPEDAVISVWDADSIYKIPQMLHDQGLDAIICEELKLEPKAADLSMWSDLVEKLEHPRHEVTIGMVGKYVDLTESYKSLIEALRHASMHTSTKVNIEYIDSEEIETHGVESLKHLDAVLVPGGFGRRGTEGKIAAIRYAREAKVPYLGICLGMQLAVIEFARDVVGLKDANSTEFDQETPNRVVALITEWYDREGRVEKRTEESDLGGTMRLGSQRCPIKPGTMAEEIYGKDVNERHRHRYEVNNRFVPQLEAGGLIISARTPSEDLPEMMELPRSMHPWFVGVQFHPEFTSTPRDGHPLFKSFVEAALAHQQSRTAAEVGEKA.

Residues 1–270 (MTKYVFVTGG…DAIICEELKL (270 aa)) are amidoligase domain. A CTP-binding site is contributed by S13. S13 serves as a coordination point for UTP. Residues 14-19 (SLGKGI) and D71 contribute to the ATP site. The Mg(2+) site is built by D71 and E144. Residues 151–153 (DIE), 191–196 (KTKPTQ), and K227 contribute to the CTP site. Residues 191-196 (KTKPTQ) and K227 contribute to the UTP site. A Glutamine amidotransferase type-1 domain is found at 295-547 (TIGMVGKYVD…VEAALAHQQS (253 aa)). L-glutamine is bound at residue G356. The active-site Nucleophile; for glutamine hydrolysis is the C383. Residues 384–387 (LGMQ), E407, and R473 each bind L-glutamine. Active-site residues include H520 and E522.

It belongs to the CTP synthase family. In terms of assembly, homotetramer.

It carries out the reaction UTP + L-glutamine + ATP + H2O = CTP + L-glutamate + ADP + phosphate + 2 H(+). It catalyses the reaction L-glutamine + H2O = L-glutamate + NH4(+). The enzyme catalyses UTP + NH4(+) + ATP = CTP + ADP + phosphate + 2 H(+). Its pathway is pyrimidine metabolism; CTP biosynthesis via de novo pathway; CTP from UDP: step 2/2. Allosterically activated by GTP, when glutamine is the substrate; GTP has no effect on the reaction when ammonia is the substrate. The allosteric effector GTP functions by stabilizing the protein conformation that binds the tetrahedral intermediate(s) formed during glutamine hydrolysis. Inhibited by the product CTP, via allosteric rather than competitive inhibition. Catalyzes the ATP-dependent amination of UTP to CTP with either L-glutamine or ammonia as the source of nitrogen. Regulates intracellular CTP levels through interactions with the four ribonucleotide triphosphates. This is CTP synthase from Paraburkholderia xenovorans (strain LB400).